A 427-amino-acid chain; its full sequence is Enolase (427 aa).

A (2R)-2-phosphoglycerate-binding site is contributed by Gln163. The active-site Proton donor is Glu205. Mg(2+)-binding residues include Asp242, Glu285, and Asp312. (2R)-2-phosphoglycerate-binding residues include Lys337, Arg366, Ser367, and Lys388. Catalysis depends on Lys337, which acts as the Proton acceptor.

The protein belongs to the enolase family. Mg(2+) serves as cofactor.

It localises to the cytoplasm. The protein resides in the secreted. It is found in the cell surface. It carries out the reaction (2R)-2-phosphoglycerate = phosphoenolpyruvate + H2O. Its pathway is carbohydrate degradation; glycolysis; pyruvate from D-glyceraldehyde 3-phosphate: step 4/5. Catalyzes the reversible conversion of 2-phosphoglycerate (2-PG) into phosphoenolpyruvate (PEP). It is essential for the degradation of carbohydrates via glycolysis. This chain is Enolase, found in Albidiferax ferrireducens (strain ATCC BAA-621 / DSM 15236 / T118) (Rhodoferax ferrireducens).